A 556-amino-acid polypeptide reads, in one-letter code: Dihydroxy-acid dehydratase (556 aa).

Cysteine 47 is a [2Fe-2S] cluster binding site. Aspartate 79 serves as a coordination point for Mg(2+). Cysteine 120 serves as a coordination point for [2Fe-2S] cluster. Positions 121 and 122 each coordinate Mg(2+). Lysine 122 carries the post-translational modification N6-carboxylysine. [2Fe-2S] cluster is bound at residue cysteine 192. Position 444 (glutamate 444) interacts with Mg(2+). The active-site Proton acceptor is the serine 470.

Belongs to the IlvD/Edd family. Homodimer. [2Fe-2S] cluster is required as a cofactor. Requires Mg(2+) as cofactor.

It catalyses the reaction (2R)-2,3-dihydroxy-3-methylbutanoate = 3-methyl-2-oxobutanoate + H2O. The enzyme catalyses (2R,3R)-2,3-dihydroxy-3-methylpentanoate = (S)-3-methyl-2-oxopentanoate + H2O. The protein operates within amino-acid biosynthesis; L-isoleucine biosynthesis; L-isoleucine from 2-oxobutanoate: step 3/4. Its pathway is amino-acid biosynthesis; L-valine biosynthesis; L-valine from pyruvate: step 3/4. Functionally, functions in the biosynthesis of branched-chain amino acids. Catalyzes the dehydration of (2R,3R)-2,3-dihydroxy-3-methylpentanoate (2,3-dihydroxy-3-methylvalerate) into 2-oxo-3-methylpentanoate (2-oxo-3-methylvalerate) and of (2R)-2,3-dihydroxy-3-methylbutanoate (2,3-dihydroxyisovalerate) into 2-oxo-3-methylbutanoate (2-oxoisovalerate), the penultimate precursor to L-isoleucine and L-valine, respectively. The polypeptide is Dihydroxy-acid dehydratase (Prochlorococcus marinus (strain MIT 9211)).